A 221-amino-acid polypeptide reads, in one-letter code: Protein Pisl_1005 (221 aa).

The region spanning 8–201 (EEGAYLVKLA…EKTPGGEIYE (194 aa)) is the AMMECR1 domain.

The polypeptide is Protein Pisl_1005 (Pyrobaculum islandicum (strain DSM 4184 / JCM 9189 / GEO3)).